The chain runs to 457 residues: ATP synthase subunit beta (457 aa).

ATP is bound at residue 147–154 (GGAGVGKT).

Belongs to the ATPase alpha/beta chains family. F-type ATPases have 2 components, CF(1) - the catalytic core - and CF(0) - the membrane proton channel. CF(1) has five subunits: alpha(3), beta(3), gamma(1), delta(1), epsilon(1). CF(0) has three main subunits: a(1), b(2) and c(9-12). The alpha and beta chains form an alternating ring which encloses part of the gamma chain. CF(1) is attached to CF(0) by a central stalk formed by the gamma and epsilon chains, while a peripheral stalk is formed by the delta and b chains.

Its subcellular location is the cell inner membrane. The enzyme catalyses ATP + H2O + 4 H(+)(in) = ADP + phosphate + 5 H(+)(out). In terms of biological role, produces ATP from ADP in the presence of a proton gradient across the membrane. The catalytic sites are hosted primarily by the beta subunits. This chain is ATP synthase subunit beta, found in Actinobacillus pleuropneumoniae serotype 3 (strain JL03).